The sequence spans 251 residues: Tritrans,polycis-undecaprenyl-diphosphate synthase (geranylgeranyl-diphosphate specific) (251 aa).

Residue aspartate 29 is part of the active site. Position 29 (aspartate 29) interacts with Mg(2+). Residues 30 to 33, phenylalanine 34, histidine 46, and 74 to 76 each bind substrate; these read GNRR and STE. Asparagine 77 functions as the Proton acceptor in the catalytic mechanism. Substrate-binding positions include phenylalanine 78, arginine 80, arginine 200, and 206 to 208; that span reads RLS.

It belongs to the UPP synthase family. Homodimer. Mg(2+) is required as a cofactor.

It catalyses the reaction geranylgeranyl diphosphate + 7 isopentenyl diphosphate = tri-trans,hepta-cis-undecaprenyl diphosphate + 7 diphosphate. Catalyzes the sequential condensation of isopentenyl diphosphate (IPP) with geranylgeranyl diphosphate (GGPP) to yield (2Z,6Z,10Z,14Z,18Z,22Z,26Z,30E,34E,38E)-undecaprenyl diphosphate (tritrans,heptacis-UPP). It is probably the precursor of glycosyl carrier lipids. The protein is Tritrans,polycis-undecaprenyl-diphosphate synthase (geranylgeranyl-diphosphate specific) of Archaeoglobus fulgidus (strain ATCC 49558 / DSM 4304 / JCM 9628 / NBRC 100126 / VC-16).